The chain runs to 604 residues: Putative JmjC domain-containing protein L887 (604 aa).

The 127-residue stretch at 1 to 127 (MNNMKKIIII…PNNKLNLIQP (127 aa)) folds into the JmjC domain. The chain crosses the membrane as a helical span at residues 4 to 24 (MKKIIIISIIIIIIIVLLFYI).

The protein resides in the membrane. In Acanthamoeba polyphaga (Amoeba), this protein is Putative JmjC domain-containing protein L887.